The primary structure comprises 1030 residues: Peroxisomal ATPase PEX6 (1030 aa).

An AAA-cassette D1 region spans residues 478–683 (VLLHSTTNNV…VETARMTATA (206 aa)). An AAA-cassette D2 region spans residues 767-956 (GILFYGPPGT…CSDAMLNAMS (190 aa)). ATP is bound at residue 772-779 (GPPGTGKT).

The protein belongs to the AAA ATPase family. Interacts with PEX1; forming the PEX1-PEX6 AAA ATPase complex, which is composed of a heterohexamer formed by a trimer of PEX1-PEX6 dimers. Interacts with PEX15; anchors PEX1-PEX6 heterooligomers to the peroxisomal membrane and mediates their association with the peroxisomal importomer. Interacts with UBP15.

It localises to the cytoplasm. The protein resides in the cytosol. The protein localises to the peroxisome membrane. It catalyses the reaction ATP + H2O = ADP + phosphate + H(+). Component of the PEX1-PEX6 AAA ATPase complex, a protein dislocase complex that mediates the ATP-dependent extraction of the PEX5 receptor from peroxisomal membranes, an essential step for PEX5 recycling. Specifically recognizes PEX5 monoubiquitinated at 'Cys-6', and pulls it out of the peroxisome lumen through the PEX2-PEX10-PEX12 retrotranslocation channel. Extraction by the PEX1-PEX6 AAA ATPase complex is accompanied by unfolding of the TPR repeats and release of bound cargo from PEX5. The chain is Peroxisomal ATPase PEX6 from Saccharomyces cerevisiae (strain ATCC 204508 / S288c) (Baker's yeast).